We begin with the raw amino-acid sequence, 216 residues long: Snake venom metalloproteinase HT-1 (216 aa).

The Disintegrin domain occupies 8–94; that stretch reads PPVCGNELLE…DCPMDDFHRN (87 aa). Positions 10, 13, 15, 17, 20, and 23 each coordinate Ca(2+). 14 disulfides stabilise this stretch: Cys-11–Cys-40, Cys-22–Cys-35, Cys-24–Cys-30, Cys-34–Cys-57, Cys-48–Cys-54, Cys-53–Cys-79, Cys-66–Cys-86, Cys-73–Cys-105, Cys-98–Cys-110, Cys-117–Cys-167, Cys-132–Cys-178, Cys-145–Cys-155, Cys-162–Cys-204, and Cys-198–Cys-209. Residues 72–74 carry the D/ECD-tripeptide motif; the sequence is ECD. N-linked (GlcNAc...) asparagine glycosylation is present at Asn-175.

This sequence belongs to the venom metalloproteinase (M12B) family. P-III subfamily. P-IIIa sub-subfamily. Monomer. Zn(2+) serves as cofactor. Expressed by the venom gland.

Its subcellular location is the secreted. Its function is as follows. Zinc protease from snake venom that induces hemorrhage. The polypeptide is Snake venom metalloproteinase HT-1 (Crotalus ruber ruber (Red diamond rattlesnake)).